The sequence spans 359 residues: Homoserine dehydrogenase (359 aa).

NAD(+) contacts are provided by Ala13, Val15, Val16, and Ala41. Residue Val16 participates in NADP(+) binding. Val16 contacts NADPH. The NADPH site is built by Lys60, Thr93, Ser94, and Lys117. Thr93 lines the NAD(+) pocket. NADP(+) is bound at residue Thr93. An NADP(+)-binding site is contributed by Lys117. 4 residues coordinate Na(+): Glu143, Val146, Ala148, and Leu150. NADP(+) contacts are provided by Gly205 and Glu208. 2 residues coordinate L-homoserine: Glu208 and Asp219. The active-site Proton donor is Lys223. Residue Lys290 forms a Glycyl lysine isopeptide (Lys-Gly) (interchain with G-Cter in ubiquitin) linkage. Gly340 provides a ligand contact to NAD(+). Gly340 contacts NADP(+). Gly340 provides a ligand contact to NADPH.

The protein belongs to the homoserine dehydrogenase family. As to quaternary structure, homodimer. A metal cation serves as cofactor.

The catalysed reaction is L-homoserine + NADP(+) = L-aspartate 4-semialdehyde + NADPH + H(+). It carries out the reaction L-homoserine + NAD(+) = L-aspartate 4-semialdehyde + NADH + H(+). It participates in amino-acid biosynthesis; L-methionine biosynthesis via de novo pathway; L-homoserine from L-aspartate: step 3/3. The protein operates within amino-acid biosynthesis; L-threonine biosynthesis; L-threonine from L-aspartate: step 3/5. Catalyzes the conversion of L-aspartate-beta-semialdehyde (L-Asa) to L-homoserine (L-Hse), the third step in the biosynthesis of amino acids that derive from aspartate (the aspartate family of amino acids), including methioinine and threonine, the latter of which is a precursor to isoleucine; production of homoserine leads to a branch-point in the pathway as it can either be O-phosphorylated for processing to threonine, or O-acylated for processing to methionine. The protein is Homoserine dehydrogenase (HOM6) of Saccharomyces cerevisiae (strain ATCC 204508 / S288c) (Baker's yeast).